The primary structure comprises 107 residues: Universal stress protein B homolog (107 aa).

2 helical membrane-spanning segments follow: residues 6-23 and 89-106; these read TILFALMVVTCVNWARYF and LFILSSALLGVTLLSSFI.

The protein belongs to the universal stress protein B family.

The protein localises to the cell inner membrane. In Vibrio atlanticus (strain LGP32) (Vibrio splendidus (strain Mel32)), this protein is Universal stress protein B homolog.